The following is a 3387-amino-acid chain: Genome polyprotein (3387 aa).

Over 1–100 (MNQRKKVVRP…LNILNGRKRS (100 aa)) the chain is Cytoplasmic. The tract at residues 36–71 (LFSGKGPLRMVLAFITFLRVLSIPPTAGILKRWGQL) is hydrophobic; homodimerization of capsid protein C. Positions 100-113 (STMTLLCLIPTVMA) are cleaved as a propeptide — ER anchor for the capsid protein C, removed in mature form by serine protease NS3. Residues 101 to 117 (TMTLLCLIPTVMAFHLS) traverse the membrane as a helical segment. Topologically, residues 118-237 (TRDGEPLMIV…GAWKHAQRVE (120 aa)) are extracellular. N-linked (GlcNAc...) asparagine; by host glycosylation is present at N182. The helical transmembrane segment at 238-258 (SWILRNPGFALLAGFMAYMIG) threads the bilayer. Over 259–265 (QTGIQRT) the chain is Cytoplasmic. Residues 266 to 279 (VFFVLMMLVAPSYG) form a helical membrane-spanning segment. At 280–723 (MRCVGVGNRD…AVHQVFGSVY (444 aa)) the chain is on the extracellular side. Intrachain disulfides connect C282-C309, C339-C400, C353-C384, and C371-C395. The N-linked (GlcNAc...) asparagine; by host glycan is linked to N346. The fusion peptide stretch occupies residues 377–390 (DRGWGNGCGLFGKG). The N-linked (GlcNAc...) asparagine; by host glycan is linked to N432. 2 disulfides stabilise this stretch: C464/C564 and C581/C612. A helical membrane pass occupies residues 724 to 744 (TTMFGGVSWMVRILIGFLVLW). Residues 745 to 750 (IGTNSR) lie on the Cytoplasmic side of the membrane. Residues 751-771 (NTSMAMTCIAVGGITLFLGFT) form a helical membrane-spanning segment. At 772 to 1194 (VQADMGCVVS…MLGDTMSGRI (423 aa)) the chain is on the extracellular side. Intrachain disulfides connect C778/C789, C829/C917, C953/C997, C1054/C1103, C1065/C1087, and C1086/C1090. N-linked (GlcNAc...) asparagine; by host glycosylation is found at N904 and N981. A helical transmembrane segment spans residues 1195-1218 (GGQVHLAIMAVFKMSPGYVLGVFL). The Lumenal segment spans residues 1219-1224 (RKLTSR). The helical transmembrane segment at 1225–1243 (ETALMVIGMAMTTVLSIPH) threads the bilayer. Residues 1244 to 1267 (DLMELIDGISLGLILLKIVTQFDN) lie on the Cytoplasmic side of the membrane. The chain crosses the membrane as a helical span at residues 1268–1288 (TQVGTLALSLTFIRSTMPLVM). Position 1289 (A1289) is a topological domain, lumenal. The chain crosses the membrane as a helical span at residues 1290–1308 (WRTIMAVLFVVTLIPLCRT). Residues 1309–1316 (SCLQKQSH) are Lumenal-facing. The chain crosses the membrane as a helical span at residues 1317–1337 (WVEITALILGAQALPVYLMTL). The Cytoplasmic segment spans residues 1338-1345 (MKGASRRS). The helical transmembrane segment at 1346-1366 (WPLNEGIMAVGLVSLLGSALL) threads the bilayer. Over 1367 to 1369 (KND) the chain is Lumenal. Residues 1370-1390 (VPLAGPMVAGGLLLAAYVMSG) traverse the membrane as a helical segment. The Cytoplasmic segment spans residues 1391 to 1437 (SSADLSLEKAANVQWDEMADITGSSPIIEVKQDEDGSFSIRDVEETN). The interacts with and activates NS3 protease stretch occupies residues 1397-1436 (LEKAANVQWDEMADITGSSPIIEVKQDEDGSFSIRDVEET). Positions 1438–1458 (MITLLVKLALITVSGLYPLAI) form an intramembrane region, helical. At 1459–2143 (PVTMTLWYMW…QHALNELPES (685 aa)) the chain is on the cytoplasmic side. The region spanning 1475 to 1652 (SGALWDVPSP…ERIGEPDYEV (178 aa)) is the Peptidase S7 domain. Residues H1525, D1549, and S1609 each act as charge relay system; for serine protease NS3 activity in the active site. One can recognise a Helicase ATP-binding domain in the interval 1654-1810 (EDIFRKKRLT…QSNSPIEDIE (157 aa)). The segment at 1658–1661 (RKKR) is important for RNA-binding. Residue 1667–1674 (LHPGAGKT) participates in ATP binding. The DEAH box signature appears at 1758–1761 (DEAH). The Helicase C-terminal domain maps to 1820-1987 (TGFDWITDYQ…IIPTLFGPER (168 aa)). K1862 carries the post-translational modification N6-acetyllysine; by host. The helical transmembrane segment at 2144–2164 (LETLMLVALLGAMTAGTFLFF) threads the bilayer. The Lumenal portion of the chain corresponds to 2165–2169 (MQGKG). The helical intramembrane region spans 2170–2190 (IGKLSMGLITIAVASGLLWVA). E2191 is a topological domain (lumenal). Residues 2192 to 2212 (LQPQWIAASIILEFFLMVLLI) traverse the membrane as a helical segment. Topologically, residues 2213 to 2225 (PEPEKQRTPQDNQ) are cytoplasmic. Residues 2226 to 2246 (LIYVILTILTIIGLIAANEMG) traverse the membrane as a helical segment. The Lumenal portion of the chain corresponds to 2247 to 2270 (LIEKTKTDFGFYQVKTETTILDVD). The helical intramembrane region spans 2271-2291 (LRPASAWTLYAVATTILTPML). Over 2292–2301 (RHTIENTSAN) the chain is Lumenal. N-linked (GlcNAc...) asparagine; by host glycosylation is found at N2297 and N2301. Positions 2302-2322 (LSLAAIANQAAVLMGLGKGWP) form an intramembrane region, helical. Topologically, residues 2323–2343 (LHRVDLGVPLLAMGCYSQVNP) are lumenal. The chain crosses the membrane as a helical span at residues 2344 to 2364 (TTLTASLVMLLVHYAIIGPGL). At 2365 to 2409 (QAKATREAQKRTAAGIMKNPTVDGITVIDLEPISYDPKFEKQLGQ) the chain is on the cytoplasmic side. The helical transmembrane segment at 2410 to 2430 (VMLLVLCAGQLLLMRTTWAFC) threads the bilayer. Topologically, residues 2431 to 2455 (EVLTLATGPILTLWEGNPGRFWNTT) are lumenal. N2453 carries N-linked (GlcNAc...) asparagine; by host glycosylation. Residues 2456–2476 (IAVSTANIFRGSYLAGAGLAF) traverse the membrane as a helical segment. The Cytoplasmic portion of the chain corresponds to 2477–3387 (SLIKNAQTPR…SAPSESEGVL (911 aa)). The 263-residue stretch at 2489 to 2751 (TGTTGETLGE…DVDLGAGTRS (263 aa)) folds into the mRNA cap 0-1 NS5-type MT domain. S2543 provides a ligand contact to S-adenosyl-L-methionine. At S2543 the chain carries Phosphoserine. The For 2'-O-MTase activity role is filled by K2548. The short motif at 2564–2567 (VVDL) is the SUMO-interacting motif element. S-adenosyl-L-methionine contacts are provided by G2573, W2574, T2591, K2592, D2618, and V2619. The For 2'-O-MTase activity role is filled by D2633. I2634 is a binding site for S-adenosyl-L-methionine. Active-site for 2'-O-MTase activity residues include K2668 and E2704. Residue Y2706 coordinates S-adenosyl-L-methionine. Residues E2925, H2929, C2934, and C2937 each coordinate Zn(2+). A RdRp catalytic domain is found at 3016 to 3166 (LMYADDTAGW…PLDERFSTSL (151 aa)). H3200, C3216, and C3335 together coordinate Zn(2+).

The protein in the N-terminal section; belongs to the class I-like SAM-binding methyltransferase superfamily. mRNA cap 0-1 NS5-type methyltransferase family. Homodimer. Interacts (via N-terminus) with host EXOC1 (via C-terminus); this interaction results in EXOC1 degradation through the proteasome degradation pathway. As to quaternary structure, forms heterodimers with envelope protein E in the endoplasmic reticulum and Golgi. In terms of assembly, homodimer; in the endoplasmic reticulum and Golgi. Interacts with protein prM. Interacts with non-structural protein 1. Homodimer; Homohexamer when secreted. Interacts with envelope protein E. As to quaternary structure, interacts (via N-terminus) with serine protease NS3. In terms of assembly, forms a heterodimer with serine protease NS3. May form homooligomers. Forms a heterodimer with NS2B. Interacts with NS4B. Interacts with unphosphorylated RNA-directed RNA polymerase NS5; this interaction stimulates RNA-directed RNA polymerase NS5 guanylyltransferase activity. Interacts with host SHFL. As to quaternary structure, interacts with host MAVS; this interaction inhibits the synthesis of IFN-beta. Interacts with host SHFL. Interacts with host AUP1; the interaction occurs in the presence of Dengue virus NS4B and induces lipophagy which facilitates production of virus progeny particles. In terms of assembly, interacts with serine protease NS3. Homodimer. Interacts with host STAT2; this interaction inhibits the phosphorylation of the latter, and, when all viral proteins are present (polyprotein), targets STAT2 for degradation. Interacts with serine protease NS3. Interacts with host PAF1 complex; the interaction may prevent the recruitment of the PAF1 complex to interferon-responsive genes, and thus reduces the immune response. Specific enzymatic cleavages in vivo yield mature proteins. Cleavages in the lumen of endoplasmic reticulum are performed by host signal peptidase, whereas cleavages in the cytoplasmic side are performed by serine protease NS3. Signal cleavage at the 2K-4B site requires a prior NS3 protease-mediated cleavage at the 4A-2K site. Post-translationally, cleaved in post-Golgi vesicles by a host furin, releasing the mature small envelope protein M, and peptide pr. This cleavage is incomplete as up to 30% of viral particles still carry uncleaved prM. In terms of processing, N-glycosylated. N-glycosylated. The excreted form is glycosylated and this is required for efficient secretion of the protein from infected cells. Post-translationally, acetylated by host KAT5. Acetylation modulates NS3 RNA-binding and unwinding activities and plays an important positive role for viral replication. In terms of processing, sumoylation of RNA-directed RNA polymerase NS5 increases NS5 protein stability allowing proper viral RNA replication. Phosphorylated on serines residues. This phosphorylation may trigger NS5 nuclear localization.

The protein resides in the virion. The protein localises to the host nucleus. It is found in the host cytoplasm. Its subcellular location is the host perinuclear region. It localises to the secreted. The protein resides in the virion membrane. The protein localises to the host endoplasmic reticulum membrane. It is found in the host mitochondrion. It catalyses the reaction Selective hydrolysis of -Xaa-Xaa-|-Yaa- bonds in which each of the Xaa can be either Arg or Lys and Yaa can be either Ser or Ala.. The catalysed reaction is RNA(n) + a ribonucleoside 5'-triphosphate = RNA(n+1) + diphosphate. The enzyme catalyses a ribonucleoside 5'-triphosphate + H2O = a ribonucleoside 5'-diphosphate + phosphate + H(+). It carries out the reaction ATP + H2O = ADP + phosphate + H(+). It catalyses the reaction a 5'-end (5'-triphosphoguanosine)-ribonucleoside in mRNA + S-adenosyl-L-methionine = a 5'-end (N(7)-methyl 5'-triphosphoguanosine)-ribonucleoside in mRNA + S-adenosyl-L-homocysteine. The catalysed reaction is a 5'-end (N(7)-methyl 5'-triphosphoguanosine)-ribonucleoside in mRNA + S-adenosyl-L-methionine = a 5'-end (N(7)-methyl 5'-triphosphoguanosine)-(2'-O-methyl-ribonucleoside) in mRNA + S-adenosyl-L-homocysteine + H(+). Its function is as follows. Plays a role in virus budding by binding to the cell membrane and gathering the viral RNA into a nucleocapsid that forms the core of a mature virus particle. During virus entry, may induce genome penetration into the host cytoplasm after hemifusion induced by the surface proteins. Can migrate to the cell nucleus where it modulates host functions. Overcomes the anti-viral effects of host EXOC1 by sequestering and degrading the latter through the proteasome degradation pathway. Functionally, inhibits RNA silencing by interfering with host Dicer. Prevents premature fusion activity of envelope proteins in trans-Golgi by binding to envelope protein E at pH6.0. After virion release in extracellular space, gets dissociated from E dimers. In terms of biological role, acts as a chaperone for envelope protein E during intracellular virion assembly by masking and inactivating envelope protein E fusion peptide. prM is the only viral peptide matured by host furin in the trans-Golgi network probably to avoid catastrophic activation of the viral fusion activity in acidic Golgi compartment prior to virion release. prM-E cleavage is inefficient, and many virions are only partially matured. These uncleaved prM would play a role in immune evasion. Its function is as follows. May play a role in virus budding. Exerts cytotoxic effects by activating a mitochondrial apoptotic pathway through M ectodomain. May display a viroporin activity. Functionally, binds to host cell surface receptor and mediates fusion between viral and cellular membranes. Envelope protein is synthesized in the endoplasmic reticulum in the form of heterodimer with protein prM. They play a role in virion budding in the ER, and the newly formed immature particle is covered with 60 spikes composed of heterodimer between precursor prM and envelope protein E. The virion is transported to the Golgi apparatus where the low pH causes dissociation of PrM-E heterodimers and formation of E homodimers. prM-E cleavage is inefficient, and many virions are only partially matured. These uncleaved prM would play a role in immune evasion. Involved in immune evasion, pathogenesis and viral replication. Once cleaved off the polyprotein, is targeted to three destinations: the viral replication cycle, the plasma membrane and the extracellular compartment. Essential for viral replication. Required for formation of the replication complex and recruitment of other non-structural proteins to the ER-derived membrane structures. Excreted as a hexameric lipoparticle that plays a role against host immune response. Antagonizing the complement function. Binds to the host macrophages and dendritic cells. Inhibits signal transduction originating from Toll-like receptor 3 (TLR3). In terms of biological role, disrupts the host endothelial glycocalyx layer of host pulmonary microvascular endothelial cells, inducing degradation of sialic acid and shedding of heparan sulfate proteoglycans. NS1 induces expression of sialidases, heparanase, and activates cathepsin L, which activates heparanase via enzymatic cleavage. These effects are probably linked to the endothelial hyperpermeability observed in severe dengue disease. Its function is as follows. Component of the viral RNA replication complex that functions in virion assembly and antagonizes the host immune response. Functionally, required cofactor for the serine protease function of NS3. May have membrane-destabilizing activity and form viroporins. Displays three enzymatic activities: serine protease, NTPase and RNA helicase. NS3 serine protease, in association with NS2B, performs its autocleavage and cleaves the polyprotein at dibasic sites in the cytoplasm: C-prM, NS2A-NS2B, NS2B-NS3, NS3-NS4A, NS4A-2K and NS4B-NS5. NS3 RNA helicase binds RNA and unwinds dsRNA in the 3' to 5' direction. In terms of biological role, regulates the ATPase activity of the NS3 helicase activity. NS4A allows NS3 helicase to conserve energy during unwinding. Plays a role in the inhibition of the host innate immune response. Interacts with host MAVS and thereby prevents the interaction between RIGI and MAVS. In turn, IFN-beta production is impaired. Interacts with host AUP1 which mediates induction of lipophagy in host cells and facilitates production of virus progeny particles. Its function is as follows. Functions as a signal peptide for NS4B and is required for the interferon antagonism activity of the latter. Functionally, induces the formation of ER-derived membrane vesicles where the viral replication takes place. Inhibits interferon (IFN)-induced host STAT1 phosphorylation and nuclear translocation, thereby preventing the establishment of cellular antiviral state by blocking the IFN-alpha/beta pathway. Replicates the viral (+) and (-) RNA genome, and performs the capping of genomes in the cytoplasm. NS5 methylates viral RNA cap at guanine N-7 and ribose 2'-O positions. Besides its role in RNA genome replication, also prevents the establishment of cellular antiviral state by blocking the interferon-alpha/beta (IFN-alpha/beta) signaling pathway. Inhibits host TYK2 and STAT2 phosphorylation, thereby preventing activation of JAK-STAT signaling pathway. May reduce immune responses by preventing the recruitment of the host PAF1 complex to interferon-responsive genes. The protein is Genome polyprotein of Dengue virus type 4 (strain Singapore/8976/1995) (DENV-4).